The sequence spans 148 residues: Transcription antitermination protein NusB (148 aa).

This sequence belongs to the NusB family.

In terms of biological role, involved in transcription antitermination. Required for transcription of ribosomal RNA (rRNA) genes. Binds specifically to the boxA antiterminator sequence of the ribosomal RNA (rrn) operons. In Saccharopolyspora erythraea (strain ATCC 11635 / DSM 40517 / JCM 4748 / NBRC 13426 / NCIMB 8594 / NRRL 2338), this protein is Transcription antitermination protein NusB.